The chain runs to 857 residues: Glucans biosynthesis glucosyltransferase H (857 aa).

Helical transmembrane passes span 141–158 (YILL…GWYM), 197–219 (LILF…MGFL), 514–536 (AVFL…LVLS), 570–592 (VALF…ILIW), 605–627 (VTLS…MIFH), and 681–703 (SFLW…SVIS).

It belongs to the glycosyltransferase 2 family. OpgH subfamily.

It localises to the cell inner membrane. The protein operates within glycan metabolism; osmoregulated periplasmic glucan (OPG) biosynthesis. Involved in the biosynthesis of osmoregulated periplasmic glucans (OPGs). This is Glucans biosynthesis glucosyltransferase H from Pseudomonas putida (strain ATCC 47054 / DSM 6125 / CFBP 8728 / NCIMB 11950 / KT2440).